A 670-amino-acid chain; its full sequence is Septation protein 7 (670 aa).

Positions 33–357 (KGIKFTFMVV…ETYRTERLTK (325 aa)) constitute a Septin-type G domain. The tract at residues 43 to 50 (GESGTGKT) is G1 motif. GTP contacts are provided by residues 43-50 (GESGTGKT), Gly137, 217-225 (KADSFTLNE), and Arg306. Residues 134 to 137 (DTPG) are G3 motif. The tract at residues 216–219 (GKAD) is G4 motif. 2 disordered regions span residues 383-513 (LNDS…QRNQ) and 574-670 (LNRQ…VSNH). The segment covering 395–404 (NNNNNNNNNN) has biased composition (low complexity). The span at 405–421 (ASTIPSMSNLAQLTTST) shows a compositional bias: polar residues. Low complexity-rich tracts occupy residues 433–446 (SITSTSSSIKKSTS) and 463–473 (SSFTSSTSTVS). The stretch at 472–606 (VSLEGGEKEG…SVQSGGVDDG (135 aa)) forms a coiled coil. Over residues 476 to 487 (GGEKEGGHHDRG) the composition is skewed to basic and acidic residues. Positions 489 to 500 (NSTSTNNNNNNN) are enriched in low complexity. The span at 631 to 645 (QSHEYDNSEYHHDDS) shows a compositional bias: basic and acidic residues.

It belongs to the TRAFAC class TrmE-Era-EngA-EngB-Septin-like GTPase superfamily. Septin GTPase family. As to quaternary structure, component of the septin complex which consists of CDC3, CDC10, CDC11, CDC12 and probably SEP7. The purified septin complex appeared to have a stoichiometry of 2 CDC3, 1 to 2 CDC10, 1 CDC11, 2 CDC12, and 1 or none SEP7 subunit. Induction of hyphal growth brings about important modifications in septin ring dynamics, because the rings were found in a different state from those of yeast cells. This hyphal-specific state contains a core of stable septins (SEP7, CDC3, and CDC12), and it shows a high CDC10 turnover between the ring and the cytoplasm. Interacts with GIN4. Post-translationally, phosphorylated by GIN4 which stabilizes the GIN4-SEP7 interaction.

It is found in the bud neck. In terms of biological role, septins are GTPases involved in cytokinesis that assemble early in the cell cycle as a patch at the incipient bud site and form a ring before bud emergence, which transforms into an hour-glass shaped collar of cortical filaments that spans both sides of the mother-bud neck. This collar persists until just before cytokinesis, when it splits into two rings that occupy opposite sides of the neck. The septins at the bud neck serve as a structural scaffold that recruits different components involved in diverse processes at specific stages during the cell cycle. Many proteins bind asymmetrically to the septin collar. The septin assembly is regulated by protein kinase GIN4. Septins are also involved in cell morphogenesis, chlamydospores morphogenesis, bud site selection, chitin deposition, cell cycle regulation, cell compartmentalization and spore wall formation. SEP7 is required to convert hyphal septin rings into the hyphal-specific state and is necessary for CDC10 turnover during hyphal growth. This chain is Septation protein 7 (SEP7), found in Candida albicans (strain SC5314 / ATCC MYA-2876) (Yeast).